Reading from the N-terminus, the 663-residue chain is UvrABC system protein B (663 aa).

One can recognise a Helicase ATP-binding domain in the interval 31–188 (DNIEGGEKAQ…NDLVDIQFER (158 aa)). ATP is bound at residue 44–51 (GATGTGKT). The Beta-hairpin motif lies at 97–120 (YYDYYQPEAYVPSSDTYIEKDSSV). The Helicase C-terminal domain maps to 435–601 (QMDDLLGEIN…TIKKDIRDLI (167 aa)). The UVR domain occupies 627-662 (QEAIKKLQKQMQEAAELLDFELAAQIRDMVLELKAM).

The protein belongs to the UvrB family. In terms of assembly, forms a heterotetramer with UvrA during the search for lesions. Interacts with UvrC in an incision complex.

It is found in the cytoplasm. Functionally, the UvrABC repair system catalyzes the recognition and processing of DNA lesions. A damage recognition complex composed of 2 UvrA and 2 UvrB subunits scans DNA for abnormalities. Upon binding of the UvrA(2)B(2) complex to a putative damaged site, the DNA wraps around one UvrB monomer. DNA wrap is dependent on ATP binding by UvrB and probably causes local melting of the DNA helix, facilitating insertion of UvrB beta-hairpin between the DNA strands. Then UvrB probes one DNA strand for the presence of a lesion. If a lesion is found the UvrA subunits dissociate and the UvrB-DNA preincision complex is formed. This complex is subsequently bound by UvrC and the second UvrB is released. If no lesion is found, the DNA wraps around the other UvrB subunit that will check the other stand for damage. In Streptococcus mutans serotype c (strain ATCC 700610 / UA159), this protein is UvrABC system protein B.